Here is a 106-residue protein sequence, read N- to C-terminus: Thioredoxin (106 aa).

In terms of domain architecture, Thioredoxin spans 2-106 (VNFLKTKADF…GLREKIKKNK (105 aa)). Active-site nucleophile residues include C32 and C35. Residues C32 and C35 are joined by a disulfide bond.

It belongs to the thioredoxin family.

The protein localises to the cytoplasm. Participates in various redox reactions through the reversible oxidation of its active center dithiol to a disulfide and catalyzes dithiol-disulfide exchange reactions. The protein is Thioredoxin (THIO) of Geodia cydonium (Sponge).